Reading from the N-terminus, the 95-residue chain is DNA-directed RNA polymerase subunit Rpo11 (95 aa).

Belongs to the archaeal Rpo11/eukaryotic RPB11/RPC19 RNA polymerase subunit family. Part of the RNA polymerase complex.

Its subcellular location is the cytoplasm. The enzyme catalyses RNA(n) + a ribonucleoside 5'-triphosphate = RNA(n+1) + diphosphate. Functionally, DNA-dependent RNA polymerase (RNAP) catalyzes the transcription of DNA into RNA using the four ribonucleoside triphosphates as substrates. This Pyrococcus horikoshii (strain ATCC 700860 / DSM 12428 / JCM 9974 / NBRC 100139 / OT-3) protein is DNA-directed RNA polymerase subunit Rpo11.